A 79-amino-acid chain; its full sequence is ATP synthase subunit c (79 aa).

The next 2 membrane-spanning stretches (helical) occupy residues 10-30 and 52-72; these read IAGA…IGVL and FFIV…LAMY.

Belongs to the ATPase C chain family. In terms of assembly, F-type ATPases have 2 components, F(1) - the catalytic core - and F(0) - the membrane proton channel. F(1) has five subunits: alpha(3), beta(3), gamma(1), delta(1), epsilon(1). F(0) has three main subunits: a(1), b(2) and c(10-14). The alpha and beta chains form an alternating ring which encloses part of the gamma chain. F(1) is attached to F(0) by a central stalk formed by the gamma and epsilon chains, while a peripheral stalk is formed by the delta and b chains.

The protein resides in the cell inner membrane. Its function is as follows. F(1)F(0) ATP synthase produces ATP from ADP in the presence of a proton or sodium gradient. F-type ATPases consist of two structural domains, F(1) containing the extramembraneous catalytic core and F(0) containing the membrane proton channel, linked together by a central stalk and a peripheral stalk. During catalysis, ATP synthesis in the catalytic domain of F(1) is coupled via a rotary mechanism of the central stalk subunits to proton translocation. Key component of the F(0) channel; it plays a direct role in translocation across the membrane. A homomeric c-ring of between 10-14 subunits forms the central stalk rotor element with the F(1) delta and epsilon subunits. This is ATP synthase subunit c from Thiobacillus denitrificans (strain ATCC 25259 / T1).